A 480-amino-acid polypeptide reads, in one-letter code: ATP synthase subunit beta (480 aa).

166-173 (GGAGVGKT) is a binding site for ATP.

It belongs to the ATPase alpha/beta chains family. As to quaternary structure, F-type ATPases have 2 components, CF(1) - the catalytic core - and CF(0) - the membrane proton channel. CF(1) has five subunits: alpha(3), beta(3), gamma(1), delta(1), epsilon(1). CF(0) has three main subunits: a(1), b(2) and c(9-12). The alpha and beta chains form an alternating ring which encloses part of the gamma chain. CF(1) is attached to CF(0) by a central stalk formed by the gamma and epsilon chains, while a peripheral stalk is formed by the delta and b chains.

It localises to the cell membrane. It carries out the reaction ATP + H2O + 4 H(+)(in) = ADP + phosphate + 5 H(+)(out). Functionally, produces ATP from ADP in the presence of a proton gradient across the membrane. The catalytic sites are hosted primarily by the beta subunits. In Streptomyces griseus subsp. griseus (strain JCM 4626 / CBS 651.72 / NBRC 13350 / KCC S-0626 / ISP 5235), this protein is ATP synthase subunit beta.